The primary structure comprises 111 residues: Beta-2-microglobulin (111 aa).

A signal peptide spans 1 to 17 (MRALILLSLGLLRVAVP). One can recognise an Ig-like C1-type domain in the interval 20–111 (PQVVVYTYKP…KTSIYKLESF (92 aa)).

This sequence belongs to the beta-2-microglobulin family. In terms of assembly, heterodimer of an alpha chain and a beta chain. Beta-2-microglobulin is the beta-chain of major histocompatibility complex class I molecules.

Its subcellular location is the secreted. Functionally, component of the class I major histocompatibility complex (MHC). Involved in the presentation of peptide antigens to the immune system. The protein is Beta-2-microglobulin (b2m) of Rostroraja eglanteria (Clearnose skate).